The sequence spans 122 residues: ATP synthase epsilon chain (122 aa).

The protein belongs to the ATPase epsilon chain family. As to quaternary structure, F-type ATPases have 2 components, CF(1) - the catalytic core - and CF(0) - the membrane proton channel. CF(1) has five subunits: alpha(3), beta(3), gamma(1), delta(1), epsilon(1). CF(0) has three main subunits: a, b and c.

The protein localises to the cell membrane. Its function is as follows. Produces ATP from ADP in the presence of a proton gradient across the membrane. The polypeptide is ATP synthase epsilon chain (Rhodococcus erythropolis (strain PR4 / NBRC 100887)).